The following is a 225-amino-acid chain: Zinc finger protein 22 (225 aa).

A disordered region spans residues 1–35; that stretch reads MRLGKPKGGISRSSSQGKVYENQRKTGRQRQRWGM. Lys-18 bears the N6-acetyllysine mark. 5 consecutive C2H2-type zinc fingers follow at residues 55–77, 83–105, 111–133, 139–161, and 167–189; these read YKCV…QKIH, HKCA…RRVH, YRCD…QRIH, YQCD…QRTH, and YQCS…TKVH. The interval 183-225 is disordered; the sequence is RQHTKVHEEEKPRKTRGRSLRAKTHSLSSWKAGKGRRSAAGLR. A compositionally biased stretch (basic residues) spans 195 to 206; sequence RKTRGRSLRAKT.

This sequence belongs to the krueppel C2H2-type zinc-finger protein family.

It is found in the nucleus. Its function is as follows. Binds DNA through the consensus sequence 5'-CAATG-3'. May be involved in transcriptional regulation and may play a role in tooth formation. In Bos taurus (Bovine), this protein is Zinc finger protein 22 (ZNF22).